Reading from the N-terminus, the 287-residue chain is Uroporphyrinogen-III C-methyltransferase (287 aa).

Residues M1–A10 show a composition bias toward polar residues. Residues M1 to V24 form a disordered region. S-adenosyl-L-methionine-binding positions include P40, G116–D118, T146, and M199.

The protein belongs to the precorrin methyltransferase family.

It catalyses the reaction uroporphyrinogen III + 2 S-adenosyl-L-methionine = precorrin-2 + 2 S-adenosyl-L-homocysteine + H(+). It functions in the pathway porphyrin-containing compound metabolism; siroheme biosynthesis; precorrin-2 from uroporphyrinogen III: step 1/1. Functionally, catalyzes the methylation of both C-2 and C-7 of uroporphyrinogen III leading to precorrin-1 and precorrin-2; their oxidative esterification gives respectively factor I octamethyl ester and sirohydrochlorin. Inactivation of uroporphyrinogen-III methyltransferase results in the loss of nitrite and nitric oxide reductase activities, but not of nitrous oxide reductase activity. Likely involved in heme D1 biosynthesis. The sequence is that of Uroporphyrinogen-III C-methyltransferase (nirE) from Paracoccus denitrificans (strain Pd 1222).